Reading from the N-terminus, the 312-residue chain is Beta-ketoacyl-[acyl-carrier-protein] synthase III (312 aa).

Residues C112 and H237 contribute to the active site. The segment at 238–242 is ACP-binding; that stretch reads QANIR. The active site involves N267.

It belongs to the thiolase-like superfamily. FabH family. Homodimer.

It is found in the cytoplasm. The enzyme catalyses (2S)-2-methylbutanoyl-CoA + malonyl-[ACP] + H(+) = (4S)-4-methyl-3-oxohexanoyl-[ACP] + CO2 + CoA. It catalyses the reaction 2-methylpropanoyl-CoA + malonyl-[ACP] + H(+) = 4-methyl-3-oxopentanoyl-[ACP] + CO2 + CoA. The catalysed reaction is 3-methylbutanoyl-CoA + malonyl-[ACP] + H(+) = 5-methyl-3-oxohexanoyl-[ACP] + CO2 + CoA. It carries out the reaction malonyl-[ACP] + acetyl-CoA + H(+) = 3-oxobutanoyl-[ACP] + CO2 + CoA. The protein operates within lipid metabolism; fatty acid biosynthesis. Functionally, catalyzes the condensation reaction of fatty acid synthesis by the addition to an acyl acceptor of two carbons from malonyl-ACP. Catalyzes the first condensation reaction which initiates fatty acid synthesis and may therefore play a role in governing the total rate of fatty acid production. Possesses both acetoacetyl-ACP synthase and acetyl transacylase activities. Can use branched-chain acyl-CoAs, with a preference for 2-methylbutanoyl-CoA, the precursor of odd-numbered anteiso fatty acids, at 30 degrees Celsius, which is further increased at a low temperature. Shows weak activity with acetyl-CoA. This chain is Beta-ketoacyl-[acyl-carrier-protein] synthase III, found in Listeria monocytogenes serotype 1/2a (strain 10403S).